The chain runs to 261 residues: 1-(5-phosphoribosyl)-5-[(5-phosphoribosylamino)methylideneamino] imidazole-4-carboxamide isomerase (261 aa).

Asp8 serves as the catalytic Proton acceptor. Asp130 serves as the catalytic Proton donor.

Belongs to the HisA/HisF family.

The protein localises to the cytoplasm. The catalysed reaction is 1-(5-phospho-beta-D-ribosyl)-5-[(5-phospho-beta-D-ribosylamino)methylideneamino]imidazole-4-carboxamide = 5-[(5-phospho-1-deoxy-D-ribulos-1-ylimino)methylamino]-1-(5-phospho-beta-D-ribosyl)imidazole-4-carboxamide. It participates in amino-acid biosynthesis; L-histidine biosynthesis; L-histidine from 5-phospho-alpha-D-ribose 1-diphosphate: step 4/9. In Prosthecochloris aestuarii (strain DSM 271 / SK 413), this protein is 1-(5-phosphoribosyl)-5-[(5-phosphoribosylamino)methylideneamino] imidazole-4-carboxamide isomerase.